The primary structure comprises 719 residues: Protein psiI (719 aa).

An N-terminal signal peptide occupies residues 1-19 (MKIIFNLLILFSLVNFINS). The Extracellular portion of the chain corresponds to 20-658 (QSTTQATTLK…ICQTGAIVST (639 aa)). Residues asparagine 62, asparagine 105, asparagine 118, asparagine 151, asparagine 315, asparagine 379, asparagine 454, asparagine 488, asparagine 500, asparagine 538, asparagine 592, and asparagine 629 are each glycosylated (N-linked (GlcNAc...) asparagine). Residues 119-261 (LTLNPSTGTY…YDYCGVCYGD (143 aa)) enclose the PA14 domain. Residues 659–679 (AVVASVVVVGAVVLGAAIFAG) form a helical membrane-spanning segment. Topologically, residues 680 to 719 (KKGYDHWKANQGQVFASSNANPLYQQSNNGGENALFEAPQ) are cytoplasmic.

Belongs to the prespore-cell-inducing factor family.

It localises to the membrane. The protein is Protein psiI (psiI) of Dictyostelium discoideum (Social amoeba).